The chain runs to 274 residues: Orotidine 5'-phosphate decarboxylase (274 aa).

Lys-95 (proton donor) is an active-site residue.

Belongs to the OMP decarboxylase family. Type 2 subfamily.

The enzyme catalyses orotidine 5'-phosphate + H(+) = UMP + CO2. It participates in pyrimidine metabolism; UMP biosynthesis via de novo pathway; UMP from orotate: step 2/2. In Paracidovorax citrulli (strain AAC00-1) (Acidovorax citrulli), this protein is Orotidine 5'-phosphate decarboxylase.